Here is an 83-residue protein sequence, read N- to C-terminus: Large ribosomal subunit protein bL28 (83 aa).

This sequence belongs to the bacterial ribosomal protein bL28 family.

This is Large ribosomal subunit protein bL28 from Amoebophilus asiaticus (strain 5a2).